A 404-amino-acid polypeptide reads, in one-letter code: Alpha-galactosidase A (404 aa).

A signal peptide spans 1-23; the sequence is MRKQLLLGLGLVSALLVSVQASA. Disulfide bonds link Cys45–Cys77 and Cys124–Cys154. Asp152 serves as the catalytic Nucleophile. 185–189 lines the substrate pocket; sequence EWGDN. Catalysis depends on Asp207, which acts as the Proton donor.

The protein belongs to the glycosyl hydrolase 27 family.

It catalyses the reaction Hydrolysis of terminal, non-reducing alpha-D-galactose residues in alpha-D-galactosides, including galactose oligosaccharides, galactomannans and galactolipids.. Hydrolyzes galactomannan found in plant cell wall, by cleaving alpha-1,6-D-galactose side-chains from the mannan backbone. Appears to act in synergy with mannanase (ManA) to elicit hydrolysis of galactomannan. Has greater activity against galactomannans with decreased degree of polymerisation values. To a lesser extent, is also able to degrade other galactosides containing alpha-1,6-linked D-galactose, such as melibiose and stachyose. The sequence is that of Alpha-galactosidase A (agaA) from Cellvibrio japonicus (strain Ueda107) (Pseudomonas fluorescens subsp. cellulosa).